A 378-amino-acid polypeptide reads, in one-letter code: Glutamate 5-kinase (378 aa).

Position 20 (Lys20) interacts with ATP. Substrate-binding residues include Ser60, Asp147, and Asn159. ATP contacts are provided by residues 179 to 180 and 221 to 227; these read TD and TGGMATK. Positions 286–364 constitute a PUA domain; sequence AGDIVIDAGA…QEIYKVLGYE (79 aa).

It belongs to the glutamate 5-kinase family.

The protein localises to the cytoplasm. The catalysed reaction is L-glutamate + ATP = L-glutamyl 5-phosphate + ADP. The protein operates within amino-acid biosynthesis; L-proline biosynthesis; L-glutamate 5-semialdehyde from L-glutamate: step 1/2. Functionally, catalyzes the transfer of a phosphate group to glutamate to form L-glutamate 5-phosphate. The polypeptide is Glutamate 5-kinase (Photobacterium profundum (strain SS9)).